The following is a 261-amino-acid chain: uncharacterized protein (261 aa).

Belongs to the PaiB family.

This is an uncharacterized protein from Aspergillus fumigatus (strain ATCC MYA-4609 / CBS 101355 / FGSC A1100 / Af293) (Neosartorya fumigata).